The sequence spans 767 residues: Transducin-like enhancer protein 2 (767 aa).

Residues 1–152 are q domain; sequence MYPQGRHPTP…SLLGQQNQLQ (152 aa). A GP domain region spans residues 153–215; the sequence is PLSHAPPVPL…SRVDRAASRS (63 aa). Residues 198–212 are compositionally biased toward basic and acidic residues; it reads RVGVDAEGSRVDRAA. 3 disordered regions span residues 198–257, 264–283, and 296–346; these read RVGV…EEDK, VDEDQPSEPPSPVTTPCGKA, and SPAS…SSAS. The segment at 216–279 is ccN domain; sequence SSPSPPESLV…SEPPSPVTTP (64 aa). The Nuclear localization signal motif lies at 238-242; the sequence is KQQRA. Residue Ser253 is modified to Phosphoserine; by CK2. The residue at position 274 (Ser274) is a Phosphoserine; by CDK1. Phosphothreonine; by CDK1 is present on Thr278. The segment at 280-447 is SP domain; the sequence is CGKAPLCIPA…VAKPAYSFHV (168 aa). Residues 296 to 309 are compositionally biased toward low complexity; it reads SPASLASSLGSPLP. Position 306 is a phosphoserine (Ser306). Residues 323–346 show a composition bias toward polar residues; sequence TPASRSCGTSPPQDSSTPGPSSAS. WD repeat units follow at residues 479–517, 525–564, 569–608, 611–650, 693–732, and 734–766; these read AHGEVVCAVTISSSTQHVYTGGKGCVKVWDVGQPGSKTP, NRDNYIRSCKLLPDGQSLIVGGEASTLSIWDLAAPTPRIK, SSAPACYALAVSPDAKVCFSCCSDGNIVVWDLQNQAMVRQ, GHTDGASCIDISDYGTRLWTGGLDNTVRCWDLREGRQLQQ, LHESCVLSLKFASCGRWFVSTGKDNLLNAWRTPYGASIFQ, and KESSSVLSCDISRNNKYIVTGSGDKKATVYEVV.

It belongs to the WD repeat Groucho/TLE family. In terms of assembly, homooligomer and heterooligomer with other family members. Binds LEF1, TCF7, TCF7L1, TCF7L2, UTY, HES1 and HES5. Post-translationally, ubiquitinated by XIAP/BIRC4. As to expression, expressed in bone marrow-derived macrophages.

It is found in the nucleus. Transcriptional corepressor that binds to a number of transcription factors. Inhibits the transcriptional activation mediated by CTNNB1 and TCF family members in Wnt signaling. The effects of full-length TLE family members may be modulated by association with dominant-negative AES. This is Transducin-like enhancer protein 2 (Tle2) from Mus musculus (Mouse).